A 284-amino-acid polypeptide reads, in one-letter code: UTP--glucose-1-phosphate uridylyltransferase (284 aa).

This sequence belongs to the UDPGP type 2 family.

The enzyme catalyses alpha-D-glucose 1-phosphate + UTP + H(+) = UDP-alpha-D-glucose + diphosphate. The sequence is that of UTP--glucose-1-phosphate uridylyltransferase (celA) from Komagataeibacter xylinus (Gluconacetobacter xylinus).